A 238-amino-acid polypeptide reads, in one-letter code: Lactate utilization protein A (238 aa).

This sequence belongs to the LutA/YkgE family.

Functionally, is involved in L-lactate degradation and allows cells to grow with lactate as the sole carbon source. This Anoxybacillus flavithermus (strain DSM 21510 / WK1) protein is Lactate utilization protein A.